A 79-amino-acid chain; its full sequence is Protein RALF-like 35 (79 aa).

A signal peptide spans 1–29 (MAAHKMSLTSLFFVSIVIVLSLFSGFGEG). Disulfide bonds link cysteine 45–cysteine 52 and cysteine 66–cysteine 72. Asparagine 68 is a glycosylation site (N-linked (GlcNAc...) asparagine).

It belongs to the plant rapid alkalinization factor (RALF) family.

It is found in the secreted. In terms of biological role, cell signaling peptide that may regulate plant stress, growth, and development. Mediates a rapid alkalinization of extracellular space by mediating a transient increase in the cytoplasmic Ca(2+) concentration leading to a calcium-dependent signaling events through a cell surface receptor and a concomitant activation of some intracellular mitogen-activated protein kinases. This is Protein RALF-like 35 from Arabidopsis thaliana (Mouse-ear cress).